The sequence spans 664 residues: DNA topoisomerase 4 subunit B (664 aa).

ATP is bound by residues Tyr7, Asn47, Asp74, 114 to 120, and Lys341; that span reads GLHGVGA. The interval 386 to 418 is disordered; sequence REAARKAREDARSGKKNKRKDTLLSGKLTPAQS. The span at 387 to 398 shows a compositional bias: basic and acidic residues; it reads EAARKAREDARS. The region spanning 424–538 is the Toprim domain; sequence NELYLVEGDS…AGRVFIALPP (115 aa). Mg(2+) is bound by residues Glu430, Asp503, and Asp505.

Belongs to the type II topoisomerase family. ParE type 2 subfamily. As to quaternary structure, heterotetramer composed of ParC and ParE. Mg(2+) is required as a cofactor. Mn(2+) serves as cofactor. Requires Ca(2+) as cofactor.

The enzyme catalyses ATP-dependent breakage, passage and rejoining of double-stranded DNA.. Functionally, topoisomerase IV is essential for chromosome segregation. It relaxes supercoiled DNA. Performs the decatenation events required during the replication of a circular DNA molecule. The polypeptide is DNA topoisomerase 4 subunit B (Staphylococcus epidermidis (strain ATCC 35984 / DSM 28319 / BCRC 17069 / CCUG 31568 / BM 3577 / RP62A)).